A 499-amino-acid polypeptide reads, in one-letter code: Isoflavone 2'-hydroxylase (499 aa).

Residue C436 participates in heme binding.

It belongs to the cytochrome P450 family. It depends on heme as a cofactor.

The protein resides in the membrane. The catalysed reaction is a 2'-unsubstituted isoflavone + reduced [NADPH--hemoprotein reductase] + O2 = a 2'-hydroxyisoflavone + oxidized [NADPH--hemoprotein reductase] + H2O + H(+). Catalyzes the hydroxylation of isoflavones, daidzein and formononetin, to yield 2'-hydroxyisoflavones, 2'-hydroxydaidzein, and 2'-hydroxyformononetin, respectively. The chain is Isoflavone 2'-hydroxylase (CYP81E1) from Glycyrrhiza echinata (Licorice).